Reading from the N-terminus, the 332-residue chain is 2-oxoglutarate-dependent dioxygenase ecdK (332 aa).

The 117-residue stretch at 178 to 294 (HASELRLNHY…RRSVAFFLKP (117 aa)) folds into the Fe2OG dioxygenase domain. Positions 206, 208, and 266 each coordinate Fe cation. Arg285 is a 2-oxoglutarate binding site.

It belongs to the iron/ascorbate-dependent oxidoreductase family. The cofactor is Fe(2+).

The protein operates within antifungal biosynthesis. Functionally, 2-oxoglutarate-dependent dioxygenase; part of the gene cluster that mediates the biosynthesis of echinocandin B, a fungal lipidated cyclic hexapeptide that acts as an antifungal agent. Linoleoyl-AMP, produced by the fatty-acyl-AMP ligase ecdI, is transferred to the initiation carrier domain (T0) of ecdA. The linoleoyl-S-phosphopantetheinyl-T0 is sequentially extended with L-ornithine, L-threonine, L-proline, L-homotyrosine, L-threonine, and 4R-methyl-L-proline to form the linear hexapeptide. Thereafter, the terminal condensation (C7) performs macrocyclization of the NRPS product and the cyclic scaffold is released from ecdA. All six of the amino acid residues are hydroxylated, including 4R,5R-dihydroxy-L-ornithine, 4R-hydroxyl-L-proline, 3S,4S-dihydroxy-L-homotyrosine, and 3S-hydroxyl-4S-methyl-L-prolin. In the pathway, all the hydroxylation reactions are proposed to occur following completion of the cyclic peptide, so the unhydroxylated precursor produced by ecdA will undergo six rounds of hydroxylation. Five hydroxylase genes (ecdG, ecdH, ecdK, htyE and htyF) are embedded within the echinocandin B (ecd) and L-homotyrosine (hty) clusters. This is 2-oxoglutarate-dependent dioxygenase ecdK from Aspergillus rugulosus (Emericella rugulosa).